The following is a 317-amino-acid chain: Beta-ketoacyl-[acyl-carrier-protein] synthase III (317 aa).

Catalysis depends on residues cysteine 112 and histidine 244. The interval 245 to 249 is ACP-binding; sequence QANLR. The active site involves asparagine 274.

The protein belongs to the thiolase-like superfamily. FabH family. In terms of assembly, homodimer.

Its subcellular location is the cytoplasm. The catalysed reaction is malonyl-[ACP] + acetyl-CoA + H(+) = 3-oxobutanoyl-[ACP] + CO2 + CoA. Its pathway is lipid metabolism; fatty acid biosynthesis. Its function is as follows. Catalyzes the condensation reaction of fatty acid synthesis by the addition to an acyl acceptor of two carbons from malonyl-ACP. Catalyzes the first condensation reaction which initiates fatty acid synthesis and may therefore play a role in governing the total rate of fatty acid production. Possesses both acetoacetyl-ACP synthase and acetyl transacylase activities. Its substrate specificity determines the biosynthesis of branched-chain and/or straight-chain of fatty acids. The polypeptide is Beta-ketoacyl-[acyl-carrier-protein] synthase III (Citrobacter koseri (strain ATCC BAA-895 / CDC 4225-83 / SGSC4696)).